Reading from the N-terminus, the 240-residue chain is Protein FANTASTIC FOUR 2 (240 aa).

Disordered regions lie at residues Thr-89 to Lys-124 and Leu-177 to Leu-229. Residues Asn-117 to Leu-171 form the FAF domain. Residues Glu-184–Glu-200 are compositionally biased toward acidic residues. Basic residues predominate over residues Gly-207–Arg-216. Residues Arg-217 to Lys-226 are compositionally biased toward basic and acidic residues.

The protein belongs to the fantastic four family. Expressed in the shoot apex, stamens, carpels and young siliques. Detected in provascular and vascular tissue, and in the center of the vegetative and inflorescence meristems. Expressed in the funiculus. In roots and leaves, predominantly expressed in phloem.

Regulates the size of the shoot meristem by modulating the CLV3-WUS feedback loop. Can repress WUS but is under negative control by CLV3. This chain is Protein FANTASTIC FOUR 2 (FAF2), found in Arabidopsis thaliana (Mouse-ear cress).